The primary structure comprises 370 residues: Putative agmatine deiminase (370 aa).

The active-site Amidino-cysteine intermediate is the Cys361.

It belongs to the agmatine deiminase family.

The enzyme catalyses agmatine + H2O = N-carbamoylputrescine + NH4(+). The protein is Putative agmatine deiminase of Shewanella baltica (strain OS155 / ATCC BAA-1091).